The following is a 257-amino-acid chain: Acetylglutamate kinase (257 aa).

Substrate contacts are provided by residues 43–44, Arg-65, and Asn-157; that span reads GG. ATP contacts are provided by residues 180–185 and 208–210; these read DVSGIL and IIT.

The protein belongs to the acetylglutamate kinase family. ArgB subfamily. As to quaternary structure, homodimer.

The protein resides in the cytoplasm. It carries out the reaction N-acetyl-L-glutamate + ATP = N-acetyl-L-glutamyl 5-phosphate + ADP. The protein operates within amino-acid biosynthesis; L-arginine biosynthesis; N(2)-acetyl-L-ornithine from L-glutamate: step 2/4. Catalyzes the ATP-dependent phosphorylation of N-acetyl-L-glutamate. This is Acetylglutamate kinase from Serratia proteamaculans (strain 568).